The primary structure comprises 195 residues: dITP/XTP pyrophosphatase (195 aa).

8-13 provides a ligand contact to substrate; that stretch reads SNNQGK. Residues Glu-39 and Asp-68 each coordinate Mg(2+). Asp-68 acts as the Proton acceptor in catalysis. Substrate is bound by residues Ser-69, 149–152, Lys-172, and 177–178; these read FGYD and HR.

This sequence belongs to the HAM1 NTPase family. As to quaternary structure, homodimer. Mg(2+) is required as a cofactor.

It catalyses the reaction XTP + H2O = XMP + diphosphate + H(+). The enzyme catalyses dITP + H2O = dIMP + diphosphate + H(+). It carries out the reaction ITP + H2O = IMP + diphosphate + H(+). Its function is as follows. Pyrophosphatase that catalyzes the hydrolysis of nucleoside triphosphates to their monophosphate derivatives, with a high preference for the non-canonical purine nucleotides XTP (xanthosine triphosphate), dITP (deoxyinosine triphosphate) and ITP. Seems to function as a house-cleaning enzyme that removes non-canonical purine nucleotides from the nucleotide pool, thus preventing their incorporation into DNA/RNA and avoiding chromosomal lesions. This is dITP/XTP pyrophosphatase from Staphylococcus aureus (strain COL).